The following is a 74-amino-acid chain: uncharacterized protein (74 aa).

This is an uncharacterized protein from Sinorhizobium fredii (strain NBRC 101917 / NGR234).